Reading from the N-terminus, the 178-residue chain is Large ribosomal subunit protein bL25 (178 aa).

This sequence belongs to the bacterial ribosomal protein bL25 family. CTC subfamily. Part of the 50S ribosomal subunit; part of the 5S rRNA/L5/L18/L25 subcomplex. Contacts the 5S rRNA. Binds to the 5S rRNA independently of L5 and L18.

Functionally, this is one of the proteins that binds to the 5S RNA in the ribosome where it forms part of the central protuberance. The polypeptide is Large ribosomal subunit protein bL25 (Helicobacter pylori (strain P12)).